Reading from the N-terminus, the 538-residue chain is Pyruvate kinase (538 aa).

Position 45 is a phosphoserine (serine 45). Position 72 (arginine 72) interacts with substrate. Residues asparagine 74, serine 76, aspartate 107, and threonine 108 each coordinate K(+). 74-77 (NFSH) provides a ligand contact to ATP. Positions 114 and 200 each coordinate ATP. Glutamate 265 is a Mg(2+) binding site. Glycine 288, aspartate 289, and threonine 321 together coordinate substrate. Aspartate 289 serves as a coordination point for Mg(2+).

The protein belongs to the pyruvate kinase family. As to quaternary structure, homotetramer. It depends on Mg(2+) as a cofactor. Requires K(+) as cofactor.

The enzyme catalyses pyruvate + ATP = phosphoenolpyruvate + ADP + H(+). Its pathway is carbohydrate degradation; glycolysis; pyruvate from D-glyceraldehyde 3-phosphate: step 5/5. This is Pyruvate kinase (pki1) from Hypocrea jecorina (Trichoderma reesei).